Consider the following 172-residue polypeptide: uncharacterized protein (172 aa).

This is an uncharacterized protein from Macaca mulatta (Rhesus macaque).